Consider the following 440-residue polypeptide: Zinc finger MYND domain-containing protein 10 (440 aa).

An interaction with DNAAF11 region spans residues 366–440 (QDLRLQARRW…VLAAQGDRAK (75 aa)). Residues Cys-394, Cys-397, Cys-405, Cys-408, Cys-414, Cys-418, His-426, and Cys-430 each contribute to the Zn(2+) site. The MYND-type zinc-finger motif lies at 394-430 (CAYCSAEASKRCSRCQNEWYCCRECQVKHWEKHGKTC).

This sequence belongs to the ZMYND10 family. Interacts (via C-terminus) with DNAAF11 (via CS domain); this interaction stabilizes DNAAF11 at the protein level. Interacts (via C-terminus) with DNAL1; this interaction stabilizes DNAL1 at the protein level. Interacts with DNAAF4, HSPA8, IQUB, RUVBL2 and DYNTL5.

The protein localises to the cytoplasm. It localises to the cytoskeleton. The protein resides in the microtubule organizing center. It is found in the centrosome. Its subcellular location is the centriolar satellite. The protein localises to the apical cell membrane. It localises to the dynein axonemal particle. Plays a role in axonemal structure organization and motility. Involved in axonemal pre-assembly of inner and outer dynein arms (IDA and ODA, respectively) for proper axoneme building for cilia motility. May act by indirectly regulating transcription of dynein proteins. The sequence is that of Zinc finger MYND domain-containing protein 10 from Homo sapiens (Human).